The following is a 1080-amino-acid chain: DNA-directed RNA polymerase subunit beta C-terminal section (1080 aa).

This sequence belongs to the RNA polymerase beta chain family. As to quaternary structure, in plastids the minimal PEP RNA polymerase catalytic core is composed of four subunits: alpha, beta, beta', and beta''. When a (nuclear-encoded) sigma factor is associated with the core the holoenzyme is formed, which can initiate transcription.

The protein resides in the plastid. It localises to the chloroplast. It carries out the reaction RNA(n) + a ribonucleoside 5'-triphosphate = RNA(n+1) + diphosphate. Functionally, DNA-dependent RNA polymerase catalyzes the transcription of DNA into RNA using the four ribonucleoside triphosphates as substrates. The polypeptide is DNA-directed RNA polymerase subunit beta C-terminal section (rpoB2) (Stigeoclonium helveticum (Green alga)).